Consider the following 1666-residue polypeptide: Latent-transforming growth factor beta-binding protein 4 (1666 aa).

The signal sequence occupies residues 1-24 (MRRPGLGGPCPLLLLLLLPAATSA). The 33-residue stretch at 148 to 180 (ARVLCPLICHNGGVCVKPDRCLCPPDFAGKFCQ) folds into the EGF-like 1 domain. Intrachain disulfides connect Cys-152/Cys-162, Cys-156/Cys-168, Cys-170/Cys-179, Cys-288/Cys-310, Cys-297/Cys-323, and Cys-311/Cys-326. The TB 1 domain maps to 286-338 (GYCFRELRGSECASPLPGLRTQEVCCRGEGLAWGVHDCHPCAEHLRNSNQVSG). Asn-351 carries an N-linked (GlcNAc...) asparagine glycan. Residues 356 to 396 (DVDECATGGRCQHGECANTRGGYTCVCPDGFLLDSSRSSCI) form the EGF-like 2; calcium-binding domain. Intrachain disulfides connect Cys-360-Cys-371, Cys-366-Cys-380, Cys-382-Cys-395, Cys-408-Cys-430, Cys-417-Cys-443, Cys-431-Cys-446, and Cys-432-Cys-458. The TB 2 domain maps to 406–458 (GPCYRVLHDGGCSLPILRNITKQICCCSRVGKAWGRGCQLCPPYGSEGFREIC). Asn-424 is a glycosylation site (N-linked (GlcNAc...) asparagine). The tract at residues 473-590 (YNTRPLNQDP…EIPESGPSSS (118 aa)) is disordered. Positions 491-502 (RVPPATPRPPTG) are enriched in pro residues. Over residues 521–561 (PRPRPEPRPRPESRPRPEPRPRPEPRPQPESQPRPESRPRP) the composition is skewed to basic and acidic residues. Pro residues predominate over residues 562–573 (ESQPWPEFPLPS). The span at 579 to 590 (GPEIPESGPSSS) shows a compositional bias: low complexity. The EGF-like 3 domain maps to 588–629 (SSSMCQRNPQVCGPGRCVPRPSGYTCACDPGFRLGPQGTRCI). 30 cysteine pairs are disulfide-bonded: Cys-592–Cys-604, Cys-599–Cys-613, Cys-615–Cys-628, Cys-634–Cys-646, Cys-641–Cys-655, Cys-657–Cys-670, Cys-676–Cys-688, Cys-683–Cys-697, Cys-699–Cys-712, Cys-718–Cys-730, Cys-725–Cys-739, Cys-741–Cys-750, Cys-757–Cys-769, Cys-764–Cys-778, Cys-780–Cys-793, Cys-799–Cys-811, Cys-806–Cys-820, Cys-822–Cys-835, Cys-881–Cys-893, Cys-887–Cys-902, Cys-904–Cys-918, Cys-924–Cys-936, Cys-930–Cys-945, Cys-947–Cys-960, Cys-966–Cys-977, Cys-972–Cys-986, Cys-988–Cys-1001, Cys-1095–Cys-1107, Cys-1101–Cys-1116, and Cys-1118–Cys-1131. The 42-residue stretch at 630–671 (DIDECRRVPTPCAPGRCENTPGSFRCVCGTGFQAGPRATECL) folds into the EGF-like 4; calcium-binding domain. Residues 672–713 (DVDECRRVPPPCDRGRCENTPGSFLCVCPAGYQAAPHGASCQ) form the EGF-like 5; calcium-binding domain. An EGF-like 6; calcium-binding domain is found at 714–751 (DVDECTQSPGLCGRGVCENLPGSFRCVCPAGFRGSACE). An EGF-like 7; calcium-binding domain is found at 753–794 (DVDECAQQPPPCGPGRCDNTAGSFHCACPAGFRSRGPGAPCQ). Residues 795 to 836 (DVDECSRSPSPCAYGRCENTEGSFKCVCPTGFQPNAAGSECE) form the EGF-like 8; calcium-binding domain. One can recognise an EGF-like 9; calcium-binding domain in the interval 877–919 (DVDECSSGTPCGLHGQCTNTKGSFHCSCSTGYRAPSGQPGPCA). Positions 920 to 961 (DINECLEGDFCFPHGECLNTDGSFTCTCAPGYRPGPRGASCL) constitute an EGF-like 10; calcium-binding domain. The region spanning 962 to 1002 (DVDECSEEDLCQSGICTNTDGSFECICPPGHRAGPDLASCL) is the EGF-like 11; calcium-binding domain. The EGF-like 12; calcium-binding domain occupies 1091 to 1132 (DVDECRNRSFCGAHAMCQNLPGSFQCVCDQGYEGARDGRHCV). Asn-1097 carries an N-linked (GlcNAc...) asparagine glycan. Residues 1171–1221 (TGRCVPPRAPAGTFPGSQPQAPASPSLPARPPAPPPPRRPSPPRQGPVSSG) are disordered. Over residues 1185–1197 (PGSQPQAPASPSL) the composition is skewed to low complexity. The segment covering 1198–1215 (PARPPAPPPPRRPSPPRQ) has biased composition (pro residues). In terms of domain architecture, TB 3 spans 1223 to 1277 (RECYFDTAAPDACDNILARNVTWQECCCTVGEGWGSGCRIQQCPGTETAEYQSLC). Cystine bridges form between Cys-1225–Cys-1248, Cys-1235–Cys-1260, Cys-1249–Cys-1265, Cys-1250–Cys-1277, Cys-1299–Cys-1312, Cys-1307–Cys-1321, Cys-1323–Cys-1336, Cys-1342–Cys-1354, Cys-1349–Cys-1363, and Cys-1365–Cys-1378. Asn-1242 carries an N-linked (GlcNAc...) asparagine glycan. The EGF-like 13; calcium-binding domain occupies 1295 to 1337 (DVDECQLFQDQVCKSGVCVNTAPGYSCYCSNGFYYHAHRLECV). In terms of domain architecture, EGF-like 14; calcium-binding spans 1338 to 1379 (DNDECADEEPACEGGRCVNTVGSYHCTCEPPLVLDGSRRRCV). Asn-1381 carries N-linked (GlcNAc...) asparagine glycosylation. In terms of domain architecture, TB 4 spans 1391–1444 (GVCWQEVGPDLVCSRPRLDRQATYTECCCLYGEAWGMDCALCPAQDSDDFEALC). Disulfide bonds link Cys-1393-Cys-1417, Cys-1403-Cys-1429, Cys-1418-Cys-1432, and Cys-1419-Cys-1444. The span at 1488 to 1500 (VLPYDPYPPPPGP) shows a compositional bias: pro residues. Residues 1488-1566 (VLPYDPYPPP…SSERGSYTGA (79 aa)) are disordered. Thr-1564 is modified (phosphothreonine). 2 EGF-like domains span residues 1575-1615 (EAEE…MSCV) and 1616-1660 (DVNE…HHCA). Disulfide bonds link Cys-1579–Cys-1590, Cys-1585–Cys-1599, Cys-1601–Cys-1614, Cys-1620–Cys-1635, Cys-1630–Cys-1644, and Cys-1646–Cys-1659.

It belongs to the LTBP family. In terms of assembly, forms part of the large latent transforming growth factor beta precursor complex; removal is essential for activation of complex. Interacts with LTBP1 and TGFB1. Interacts with EFEMP2; this interaction promotes fibrillar deposition of EFEMP2. Contains hydroxylated asparagine residues.

It is found in the secreted. The protein resides in the extracellular space. The protein localises to the extracellular matrix. Key regulator of transforming growth factor beta (TGFB1, TGFB2 and TGFB3) that controls TGF-beta activation by maintaining it in a latent state during storage in extracellular space. Associates specifically via disulfide bonds with the Latency-associated peptide (LAP), which is the regulatory chain of TGF-beta, and regulates integrin-dependent activation of TGF-beta. This Mus musculus (Mouse) protein is Latent-transforming growth factor beta-binding protein 4 (Ltbp4).